Reading from the N-terminus, the 650-residue chain is Hemocyanin subunit 2 (650 aa).

Ser-120 and Ser-172 each carry an O-linked (GalNAc...) serine glycan. Residues His-193, His-197, and His-225 each coordinate Cu cation. Asn-309 carries an N-linked (GlcNAc...) asparagine glycan. Positions 344, 348, and 384 each coordinate Cu cation.

It belongs to the tyrosinase family. Hemocyanin subfamily. In terms of assembly, hexamer of a number of different chains, of which five have been identified. Post-translationally, contains one N-glycosylated and three O-glycosylated residues. The position of one of the O-glycosylated residues has not been determined. In terms of processing, O-linked glycan at Ser-120 may be composed of two GalNAc, three Gal, and two N-acetylneuraminic acid units for a total 1525-Da MW. As to expression, hemolymph.

The protein localises to the secreted. It localises to the extracellular space. Its function is as follows. Hemocyanins are copper-containing oxygen carriers occurring freely dissolved in the hemolymph of many mollusks and arthropods. This chain is Hemocyanin subunit 2, found in Carcinus aestuarii (Green crab).